The chain runs to 358 residues: Chorismate synthase (358 aa).

2 residues coordinate NADP(+): Arg48 and Arg54. Residues 125-127, Gly282, 297-301, and Arg323 contribute to the FMN site; these read RSS and KPPAS.

This sequence belongs to the chorismate synthase family. Homotetramer. FMNH2 is required as a cofactor.

The enzyme catalyses 5-O-(1-carboxyvinyl)-3-phosphoshikimate = chorismate + phosphate. It functions in the pathway metabolic intermediate biosynthesis; chorismate biosynthesis; chorismate from D-erythrose 4-phosphate and phosphoenolpyruvate: step 7/7. Catalyzes the anti-1,4-elimination of the C-3 phosphate and the C-6 proR hydrogen from 5-enolpyruvylshikimate-3-phosphate (EPSP) to yield chorismate, which is the branch point compound that serves as the starting substrate for the three terminal pathways of aromatic amino acid biosynthesis. This reaction introduces a second double bond into the aromatic ring system. The sequence is that of Chorismate synthase from Roseiflexus castenholzii (strain DSM 13941 / HLO8).